The sequence spans 550 residues: Hydroxylamine reductase (550 aa).

Positions 3, 6, 18, and 25 each coordinate [2Fe-2S] cluster. H249, E273, C317, C405, C433, C458, E492, and K494 together coordinate hybrid [4Fe-2O-2S] cluster. Cysteine persulfide is present on C405.

This sequence belongs to the HCP family. [2Fe-2S] cluster serves as cofactor. Requires hybrid [4Fe-2O-2S] cluster as cofactor.

Its subcellular location is the cytoplasm. It catalyses the reaction A + NH4(+) + H2O = hydroxylamine + AH2 + H(+). Catalyzes the reduction of hydroxylamine to form NH(3) and H(2)O. This chain is Hydroxylamine reductase, found in Salmonella enteritidis PT4 (strain P125109).